Here is a 194-residue protein sequence, read N- to C-terminus: Dephospho-CoA kinase (194 aa).

Positions 4 to 194 (ALGLTGSIGM…HLVSKLTEGT (191 aa)) constitute a DPCK domain. ATP is bound at residue 12–17 (GMGKST).

The protein belongs to the CoaE family.

The protein localises to the cytoplasm. It carries out the reaction 3'-dephospho-CoA + ATP = ADP + CoA + H(+). Its pathway is cofactor biosynthesis; coenzyme A biosynthesis; CoA from (R)-pantothenate: step 5/5. In terms of biological role, catalyzes the phosphorylation of the 3'-hydroxyl group of dephosphocoenzyme A to form coenzyme A. The protein is Dephospho-CoA kinase of Jannaschia sp. (strain CCS1).